The chain runs to 357 residues: Spore wall and anchoring disk complex protein EnP1 (357 aa).

Residues Met-1–Ala-16 form the signal peptide. Asn-47 is a glycosylation site (N-linked (GlcNAc...) asparagine). Positions Glu-150 to Ile-158 match the HBM1 motif. The HBM2 motif lies at Leu-329 to Gly-334.

The protein resides in the spore wall. It is found in the spore. It localises to the perispore. Its function is as follows. Spore wall protein involved in the adhesion to host cells surface glycoaminoglycans (GAGs). Microsporidian spore adherence is an integral part of activation and host cell invasion which requires the extrusion at the spore apex of a very long and coiled structure, the polar tube, through which the sporoplasm is pushed to enter into the potential host cell. The polypeptide is Spore wall and anchoring disk complex protein EnP1 (EnP1) (Encephalitozoon cuniculi (strain GB-M1) (Microsporidian parasite)).